The primary structure comprises 215 residues: Glutathione S-transferase D6 (215 aa).

The 80-residue stretch at 1 to 80 (MDLYNMSGSP…YLVEQYGKDD (80 aa)) folds into the GST N-terminal domain. Glutathione is bound by residues Ser-9, 50–52 (HTI), and 64–66 (ETR). The GST C-terminal domain occupies 86–206 (DPQKQALINQ…LARIQSAKKF (121 aa)).

It belongs to the GST superfamily. Delta family. As to quaternary structure, homodimer.

The catalysed reaction is RX + glutathione = an S-substituted glutathione + a halide anion + H(+). Functionally, conjugation of reduced glutathione to a wide number of exogenous and endogenous hydrophobic electrophiles. May be involved in detoxification. The sequence is that of Glutathione S-transferase D6 from Drosophila melanogaster (Fruit fly).